The primary structure comprises 468 residues: MTSTEGILAGKYPAKAHARRVVEYLRQNGFEGDGVLYLEAQKTKMIEDNDSEQPFRQRRFFFYLSGCLLPDAHLTYHISSDKLALFIPPLDPESVIWSGLPLSPTQAKELYDVDEVLYTTDINPTLAHLASEVGTSGFVFAIDGQISDDISFKNFPETDLVALKTAIEECRVVKDAYEVAMIRKANDVTAQAHVAVLKATKSATNERELEAAFIGTCIAHGCREMAYHPIVASGTSSATLHYVNNDEPLIDLTTNKKKLNLLLDAAGEYKTYCADVTRTFPLSGKFSPESRQIYDIVLEMQTKSLAMLKEGVLWEDVHVTAHRVAIKGLLKLGILRGSEEELLEKRISVAFFPHGLGHYLGMDTHDTGGHANYADKDKMFRYLRVRGKLPAGSVITVEPGVYFCRFIIEPYLKDSELSKYIDADVLEKYWEVGGVRIEDNIHITKEGYDNLTTAPKTADQLELMINGS.

Mn(2+) is bound by residues aspartate 264, aspartate 275, glutamate 398, and glutamate 438.

The protein belongs to the peptidase M24B family. Mn(2+) is required as a cofactor.

It carries out the reaction Release of any N-terminal amino acid, including proline, that is linked to proline, even from a dipeptide or tripeptide.. Its function is as follows. Catalyzes the removal of a penultimate prolyl residue from the N-termini of peptides. The sequence is that of Probable Xaa-Pro aminopeptidase pepP (pepP) from Talaromyces stipitatus (strain ATCC 10500 / CBS 375.48 / QM 6759 / NRRL 1006) (Penicillium stipitatum).